The primary structure comprises 159 residues: Eukaryotic translation initiation factor 5A-2 (159 aa).

Residues 1–10 are compositionally biased toward basic and acidic residues; the sequence is MSDEEHHFEP. Residues 1-21 form a disordered region; the sequence is MSDEEHHFEPAADAGASKTYP. Lysine 52 carries the post-translational modification Hypusine.

This sequence belongs to the eIF-5A family. Post-translationally, lys-52 undergoes hypusination, a unique post-translational modification that consists in the addition of a butylamino group from spermidine to lysine side chain, leading to the formation of the unusual amino acid hypusine. eIF-5As are the only known proteins to undergo this modification, which is essential for their function.

Functionally, translation factor that promotes translation elongation and termination, particularly upon ribosome stalling at specific amino acid sequence contexts. Binds between the exit (E) and peptidyl (P) site of the ribosome and promotes rescue of stalled ribosome: specifically required for efficient translation of polyproline-containing peptides as well as other motifs that stall the ribosome. Acts as a ribosome quality control (RQC) cofactor by joining the RQC complex to facilitate peptidyl transfer during CAT tailing step. The protein is Eukaryotic translation initiation factor 5A-2 of Medicago sativa (Alfalfa).